The primary structure comprises 613 residues: Immunoglobulin superfamily member 8 (613 aa).

The signal sequence occupies residues Met-1 to Ala-27. 4 Ig-like C2-type domains span residues Arg-28 to Leu-149, Pro-162 to Ile-286, Ser-303 to Ser-424, and Pro-431 to Ala-560. At Arg-28–Thr-579 the chain is on the extracellular side. An intrachain disulfide couples Cys-49 to Cys-127. Asn-50 carries an N-linked (GlcNAc...) asparagine glycan. The segment at Val-155–Met-174 is disordered. Residues Cys-186 and Cys-270 are joined by a disulfide bond. An EWI motif motif is present at residues Glu-274–Ile-276. 2 disulfide bridges follow: Cys-326–Cys-406 and Cys-462–Cys-544. Residues Asn-327 and Asn-463 are each glycosylated (N-linked (GlcNAc...) asparagine). Residue Ser-518 is modified to Phosphoserine. The chain crosses the membrane as a helical span at residues Leu-580–Gly-600. The Cytoplasmic segment spans residues Thr-601–Arg-613. 2 S-palmitoyl cysteine lipidation sites follow: Cys-604 and Cys-605.

As to quaternary structure, interacts directly with CD82, CD81/tetraspanin-28 and CD9/tetraspanin-29. Also interacts with integrin alpha-3/beta-1 and integrin alpha-4/beta-1. Interacts with HSPA8; this interaction modulates migratory and antigen-presenting capacities of dendritic cells. Expressed in brain, kidney, testis, liver and placenta with moderate expression in all other tissues. Detected on a majority of B-cells, T-cells, and natural killer cells. Expressed on dendritic cells.

Its subcellular location is the cell membrane. Its function is as follows. Member of the immunoglobulin superfamily (IgSF) that links tetraspanin-enriched microdomains to the actin cytoskeleton and plays several important roles in innate and adaptive immunity. Acts as an inducible receptor of HSPA8 on dendritic cells to enhance the CCL21/SLC-dependent migration of activated mature dendritic cells while attenuating their antigen-specific stimulatory capacities. In complex with alpha-actinins ACTN1 and ACTN4, regulates actin dynamics in the immune synapse and subsequent T-cell activation. Inhibits the entry of several viruses such as hepatitis C Virus (HCV) or HIV-1. Mechanistically, promotes a change in CD81 organization at the plasma membrane by significantly restricting its diffusion which in turn influences CD81 interaction with Claudin-1/CLDN1, preventing CLDN1 from acting as a co-receptor required for HCV entry. Accumulates at the presynaptic terminal, the producer cell side of the virological synapse, to prevent HIV-1 Env-mediated cell-cell fusion. Highly expressed on malignant cells with antigen presentation defects, interacts with NK receptor KIR3DL2 to suppress NK-cell cytotoxicity. May participate in the regulation of neurite outgrowth and maintenance of the neural network in the adult brain. The sequence is that of Immunoglobulin superfamily member 8 (IGSF8) from Homo sapiens (Human).